Here is a 547-residue protein sequence, read N- to C-terminus: Apicoplast pyruvate carrier 1 (547 aa).

Residues 1–33 are disordered; that stretch reads MEPRAPPRLSVSSPRRESGATVPSHSPSTLLSC. Residues 1-45 are Cytoplasmic-facing; sequence MEPRAPPRLSVSSPRRESGATVPSHSPSTLLSCASSETATEKRRR. Over residues 21–33 the composition is skewed to polar residues; sequence TVPSHSPSTLLSC. 12 consecutive transmembrane segments (helical) span residues 46–66, 126–146, 167–187, 189–209, 212–232, 278–298, 345–365, 385–405, 417–437, 445–465, 467–487, and 515–535; these read WTGV…GTVY, AWVL…GGIA, VGMA…FGVI, GVGL…WFPE, GIVS…FSPL, LLAV…RVPA, ALVS…GLAI, ILTE…NAVG, GFQT…FFLP, LCYA…FSVF, SAVA…FIFG, and LMGL…ALSP.

It belongs to the major facilitator superfamily. In terms of assembly, interacts with apicoplast pyruvate carrier 2.

Its subcellular location is the plastid. It localises to the apicoplast. The protein localises to the membrane. Along with apicoplast pyruvate carrier 2, forms apicoplast pyruvate carrier (APC) complex, which transports pyruvate into the apicoplast and may also transport amino acids like methionine, serine, glycine and tryptophan with low efficiency. Required for maintaining pyruvate-dependent metabolic activities in the apicoplast, such as synthesis of fatty acids, isopentenyl pyrophosphate (IPP), dimethylallyl pyrophosphate (DMAPP) and methylerythritol 4-phosphate (MEP). Required for maintaining the integrity of the apicoplast. Required for normal parasite growth. The protein is Apicoplast pyruvate carrier 1 of Toxoplasma gondii.